A 350-amino-acid chain; its full sequence is L-serine dehydratase (350 aa).

Lys-62 bears the N6-(pyridoxal phosphate)lysine mark.

It belongs to the serine/threonine dehydratase family. It depends on pyridoxal 5'-phosphate as a cofactor.

The protein resides in the cytoplasm. The enzyme catalyses L-serine = pyruvate + NH4(+). The protein operates within carbohydrate biosynthesis; gluconeogenesis. The chain is L-serine dehydratase (sds) from Dictyostelium discoideum (Social amoeba).